Reading from the N-terminus, the 207-residue chain is Holliday junction branch migration complex subunit RuvA (207 aa).

The tract at residues 1–64 (MIGRLRGNLL…EDAQLLYGFN (64 aa)) is domain I. Positions 65–143 (TKNERALFRE…GWGAGDLFTP (79 aa)) are domain II. Residues 144-158 (ATDAAPMDDGSEFIT) form a flexible linker region. Residues 159 to 207 (SPQSAVDEAVSALIALGYKPQQASKTVSQVAKPDMTSEVLIRESLKSMI) form a domain III region.

This sequence belongs to the RuvA family. Homotetramer. Forms an RuvA(8)-RuvB(12)-Holliday junction (HJ) complex. HJ DNA is sandwiched between 2 RuvA tetramers; dsDNA enters through RuvA and exits via RuvB. An RuvB hexamer assembles on each DNA strand where it exits the tetramer. Each RuvB hexamer is contacted by two RuvA subunits (via domain III) on 2 adjacent RuvB subunits; this complex drives branch migration. In the full resolvosome a probable DNA-RuvA(4)-RuvB(12)-RuvC(2) complex forms which resolves the HJ.

The protein localises to the cytoplasm. The RuvA-RuvB-RuvC complex processes Holliday junction (HJ) DNA during genetic recombination and DNA repair, while the RuvA-RuvB complex plays an important role in the rescue of blocked DNA replication forks via replication fork reversal (RFR). RuvA specifically binds to HJ cruciform DNA, conferring on it an open structure. The RuvB hexamer acts as an ATP-dependent pump, pulling dsDNA into and through the RuvAB complex. HJ branch migration allows RuvC to scan DNA until it finds its consensus sequence, where it cleaves and resolves the cruciform DNA. The polypeptide is Holliday junction branch migration complex subunit RuvA (Aliivibrio fischeri (strain MJ11) (Vibrio fischeri)).